The chain runs to 564 residues: Dihydroxy-acid dehydratase (564 aa).

Residue Cys53 participates in [2Fe-2S] cluster binding. Asp85 is a binding site for Mg(2+). Cys126 is a [2Fe-2S] cluster binding site. Mg(2+) contacts are provided by Asp127 and Lys128. Lys128 is subject to N6-carboxylysine. Residue Cys203 participates in [2Fe-2S] cluster binding. Glu454 is a Mg(2+) binding site. The active-site Proton acceptor is Ser480.

This sequence belongs to the IlvD/Edd family. In terms of assembly, homodimer. The cofactor is [2Fe-2S] cluster. Requires Mg(2+) as cofactor.

The enzyme catalyses (2R)-2,3-dihydroxy-3-methylbutanoate = 3-methyl-2-oxobutanoate + H2O. It carries out the reaction (2R,3R)-2,3-dihydroxy-3-methylpentanoate = (S)-3-methyl-2-oxopentanoate + H2O. It functions in the pathway amino-acid biosynthesis; L-isoleucine biosynthesis; L-isoleucine from 2-oxobutanoate: step 3/4. The protein operates within amino-acid biosynthesis; L-valine biosynthesis; L-valine from pyruvate: step 3/4. In terms of biological role, functions in the biosynthesis of branched-chain amino acids. Catalyzes the dehydration of (2R,3R)-2,3-dihydroxy-3-methylpentanoate (2,3-dihydroxy-3-methylvalerate) into 2-oxo-3-methylpentanoate (2-oxo-3-methylvalerate) and of (2R)-2,3-dihydroxy-3-methylbutanoate (2,3-dihydroxyisovalerate) into 2-oxo-3-methylbutanoate (2-oxoisovalerate), the penultimate precursor to L-isoleucine and L-valine, respectively. This chain is Dihydroxy-acid dehydratase, found in Clavibacter michiganensis subsp. michiganensis (strain NCPPB 382).